We begin with the raw amino-acid sequence, 101 residues long: Small ribosomal subunit protein uS10 (101 aa).

Belongs to the universal ribosomal protein uS10 family. Part of the 30S ribosomal subunit.

In terms of biological role, involved in the binding of tRNA to the ribosomes. This chain is Small ribosomal subunit protein uS10, found in Mycobacterium ulcerans (strain Agy99).